We begin with the raw amino-acid sequence, 239 residues long: Large ribosomal subunit protein uL1 (239 aa).

Belongs to the universal ribosomal protein uL1 family. Part of the 50S ribosomal subunit.

In terms of biological role, binds directly to 23S rRNA. The L1 stalk is quite mobile in the ribosome, and is involved in E site tRNA release. Functionally, protein L1 is also a translational repressor protein, it controls the translation of the L11 operon by binding to its mRNA. In Rickettsia rickettsii (strain Iowa), this protein is Large ribosomal subunit protein uL1.